The chain runs to 479 residues: Aryl-phospho-beta-D-glucosidase BglA (479 aa).

Catalysis depends on Glu-176, which acts as the Proton donor. Glu-377 serves as the catalytic Nucleophile.

The protein belongs to the glycosyl hydrolase 1 family.

The catalysed reaction is 6-phospho-beta-D-glucosyl-(1-&gt;4)-D-glucose + H2O = D-glucose 6-phosphate + D-glucose. Catalyzes the hydrolysis of aryl-phospho-beta-D-glucosides such as 4-methylumbelliferyl-phospho-beta-D-glucopyranoside (MUG-P), phosphoarbutin and phosphosalicin. Plays a major role in the utilization of arbutin or salicin as the sole carbon source. BglA and BglH are the major proteins contributing to hydrolysis of MUG-P by extracts of late-exponential-phase or stationary-phase B.subtilis cells. This is Aryl-phospho-beta-D-glucosidase BglA (bglA) from Bacillus subtilis (strain 168).